Here is a 572-residue protein sequence, read N- to C-terminus: Hexokinase (572 aa).

The Hexokinase domain maps to 49–492; the sequence is DEPPISLETV…SGKGAALITA (444 aa). The interval 105-237 is hexokinase small subdomain; the sequence is NGTEEGRFIA…DIKVEVVALI (133 aa). Residues 116 to 120 and serine 185 contribute to the D-glucose 6-phosphate site; that span reads DLGGT. Residue 116 to 121 coordinates ATP; sequence DLGGTN. Substrate-binding positions include 185–186, 202–203, and 238–239; these read SY, TK, and ND. Residues 238–481 form a hexokinase large subdomain region; the sequence is NDTVGTMVAA…LKFKLLQTAD (244 aa). D-glucose 6-phosphate contacts are provided by aspartate 239 and threonine 263. Threonine 263 is a binding site for ATP. Asparagine 266, glutamate 297, and aspartate 331 together coordinate substrate. ATP contacts are provided by residues 336–337, 373–377, and 448–452; these read GK, TKYIS, and STYKY. D-glucose 6-phosphate contacts are provided by residues 446 to 448 and serine 483; that span reads DGS.

Belongs to the hexokinase family.

The enzyme catalyses a D-hexose + ATP = a D-hexose 6-phosphate + ADP + H(+). It carries out the reaction D-mannose + ATP = D-mannose 6-phosphate + ADP + H(+). It catalyses the reaction D-fructose + ATP = D-fructose 6-phosphate + ADP + H(+). The catalysed reaction is D-glucose + ATP = D-glucose 6-phosphate + ADP + H(+). It participates in carbohydrate metabolism; hexose metabolism. The protein operates within carbohydrate degradation; glycolysis; D-glyceraldehyde 3-phosphate and glycerone phosphate from D-glucose: step 1/4. Its activity is regulated as follows. Activated by glucose-6-phosphate. Inhibited by N-acetylglucosamine, glucosamine, mannoheptulose and ADP. Active against glucose, fructose, mannose, maltose and galactose. This chain is Hexokinase, found in Brugia malayi (Filarial nematode worm).